A 702-amino-acid chain; its full sequence is Methionine--tRNA ligase (702 aa).

The 'HIGH' region motif lies at 23–33 (PYANGPLHLGH). Zn(2+)-binding residues include C154, C157, C167, and C170. The short motif at 341-345 (KMSKS) is the 'KMSKS' region element. Residue K344 participates in ATP binding. The disordered stretch occupies residues 562-593 (LAPPPASAKQQNASMSNTAPPPTAEKPETTAP). The segment covering 569-578 (AKQQNASMSN) has biased composition (polar residues). Residues 599-702 (DFAKLDLRIG…SSAQPGMPVR (104 aa)) enclose the tRNA-binding domain.

This sequence belongs to the class-I aminoacyl-tRNA synthetase family. MetG type 1 subfamily. As to quaternary structure, homodimer. Requires Zn(2+) as cofactor.

Its subcellular location is the cytoplasm. It catalyses the reaction tRNA(Met) + L-methionine + ATP = L-methionyl-tRNA(Met) + AMP + diphosphate. Is required not only for elongation of protein synthesis but also for the initiation of all mRNA translation through initiator tRNA(fMet) aminoacylation. In Xylella fastidiosa (strain 9a5c), this protein is Methionine--tRNA ligase.